Here is a 171-residue protein sequence, read N- to C-terminus: UPF0312 protein SAB2563 (171 aa).

It belongs to the UPF0312 family.

The protein is UPF0312 protein SAB2563 of Staphylococcus aureus (strain bovine RF122 / ET3-1).